We begin with the raw amino-acid sequence, 640 residues long: 1-deoxy-D-xylulose-5-phosphate synthase (640 aa).

Thiamine diphosphate contacts are provided by residues His-79 and 120 to 122 (AHS). Asp-151 is a Mg(2+) binding site. Thiamine diphosphate is bound by residues 152–153 (GA), Asn-180, Tyr-289, and Glu-371. Asn-180 is a Mg(2+) binding site.

It belongs to the transketolase family. DXPS subfamily. In terms of assembly, homodimer. Mg(2+) is required as a cofactor. Thiamine diphosphate serves as cofactor.

It catalyses the reaction D-glyceraldehyde 3-phosphate + pyruvate + H(+) = 1-deoxy-D-xylulose 5-phosphate + CO2. It participates in metabolic intermediate biosynthesis; 1-deoxy-D-xylulose 5-phosphate biosynthesis; 1-deoxy-D-xylulose 5-phosphate from D-glyceraldehyde 3-phosphate and pyruvate: step 1/1. Functionally, catalyzes the acyloin condensation reaction between C atoms 2 and 3 of pyruvate and glyceraldehyde 3-phosphate to yield 1-deoxy-D-xylulose-5-phosphate (DXP). In Novosphingobium aromaticivorans (strain ATCC 700278 / DSM 12444 / CCUG 56034 / CIP 105152 / NBRC 16084 / F199), this protein is 1-deoxy-D-xylulose-5-phosphate synthase.